A 156-amino-acid polypeptide reads, in one-letter code: MPRRRVVGQRKILPDPKFHSELLAKFINVIMQDGKKSTAEKIIYKALDVVAEKKSENHLVILEAALDNVRPSVEVKSRRVGGSTYQVPCEVRPVRRNALAMRWLVEAARKRGEKSMALRLAGEMLDASENKGTAVKKREDVHRMAEANKAFAHYRW.

The protein belongs to the universal ribosomal protein uS7 family. As to quaternary structure, part of the 30S ribosomal subunit. Contacts proteins S9 and S11.

Functionally, one of the primary rRNA binding proteins, it binds directly to 16S rRNA where it nucleates assembly of the head domain of the 30S subunit. Is located at the subunit interface close to the decoding center, probably blocks exit of the E-site tRNA. In Shewanella sp. (strain W3-18-1), this protein is Small ribosomal subunit protein uS7.